The primary structure comprises 349 residues: Ion-translocating oxidoreductase complex subunit D (349 aa).

3 helical membrane-spanning segments follow: residues 20 to 42, 77 to 99, and 124 to 144; these read VMQR…FGWG, SAML…WMIV, and AMAA…TWIA. Threonine 185 carries the FMN phosphoryl threonine modification. 5 consecutive transmembrane segments (helical) span residues 212–232, 239–259, 265–285, 291–311, and 315–335; these read STGV…LVLL, WHIS…GFLL, ASPL…FIAT, ATSP…VYII, and GGYP…APFI.

This sequence belongs to the NqrB/RnfD family. The complex is composed of six subunits: RnfA, RnfB, RnfC, RnfD, RnfE and RnfG. Requires FMN as cofactor.

The protein localises to the cell inner membrane. Its function is as follows. Part of a membrane-bound complex that couples electron transfer with translocation of ions across the membrane. The protein is Ion-translocating oxidoreductase complex subunit D of Shewanella baltica (strain OS195).